The chain runs to 122 residues: Large ribosomal subunit protein uL14 (122 aa).

Belongs to the universal ribosomal protein uL14 family. Part of the 50S ribosomal subunit. Forms a cluster with proteins L3 and L19. In the 70S ribosome, L14 and L19 interact and together make contacts with the 16S rRNA in bridges B5 and B8.

In terms of biological role, binds to 23S rRNA. Forms part of two intersubunit bridges in the 70S ribosome. The chain is Large ribosomal subunit protein uL14 from Buchnera aphidicola subsp. Acyrthosiphon pisum (strain 5A).